Reading from the N-terminus, the 355-residue chain is Uroporphyrinogen decarboxylase (355 aa).

Substrate-binding positions include 27–31 (RQAGR), aspartate 77, tyrosine 154, threonine 209, and histidine 327.

Belongs to the uroporphyrinogen decarboxylase family. In terms of assembly, homodimer.

The protein localises to the cytoplasm. It carries out the reaction uroporphyrinogen III + 4 H(+) = coproporphyrinogen III + 4 CO2. It functions in the pathway porphyrin-containing compound metabolism; protoporphyrin-IX biosynthesis; coproporphyrinogen-III from 5-aminolevulinate: step 4/4. Its function is as follows. Catalyzes the decarboxylation of four acetate groups of uroporphyrinogen-III to yield coproporphyrinogen-III. This is Uroporphyrinogen decarboxylase from Yersinia pestis bv. Antiqua (strain Antiqua).